A 308-amino-acid polypeptide reads, in one-letter code: uncharacterized protein (308 aa).

The next 10 helical transmembrane spans lie at 45–65 (LGLA…KIAL), 69–89 (SPFA…LPFL), 100–120 (IGIA…YTTA), 122–142 (NAGF…WLVY), 151–171 (VSGV…SGFN), 172–192 (IGDI…AMIS), 201–221 (TMLA…FAVF), 226–246 (FEIN…ATFV), 263–283 (AAVI…AVLA), and 285–305 (ILTP…IIVS). 2 consecutive EamA domains span residues 52–166 (LIWG…FLSG) and 178–306 (LFCA…IVSL).

The protein belongs to the EamA transporter family.

It is found in the cell membrane. This is an uncharacterized protein from Archaeoglobus fulgidus (strain ATCC 49558 / DSM 4304 / JCM 9628 / NBRC 100126 / VC-16).